Consider the following 85-residue polypeptide: Large ribosomal subunit protein bL27 (85 aa).

Belongs to the bacterial ribosomal protein bL27 family.

The sequence is that of Large ribosomal subunit protein bL27 from Campylobacter hominis (strain ATCC BAA-381 / DSM 21671 / CCUG 45161 / LMG 19568 / NCTC 13146 / CH001A).